We begin with the raw amino-acid sequence, 274 residues long: Homeobox-leucine zipper protein HAT9 (274 aa).

The span at serine 64–serine 74 shows a compositional bias: low complexity. Positions serine 64–glutamate 96 are disordered. The segment at residues serine 110–glutamine 169 is a DNA-binding region (homeobox). The tract at residues leucine 177 to leucine 198 is leucine-zipper.

Belongs to the HD-ZIP homeobox family. Class II subfamily.

It is found in the nucleus. In terms of biological role, probable transcription factor. The sequence is that of Homeobox-leucine zipper protein HAT9 (HAT9) from Arabidopsis thaliana (Mouse-ear cress).